The chain runs to 7481 residues: Polyketide synthase GfsA (7481 aa).

Positions 24-1020 are loading module (LM); sequence ASDEPIAVIG…ETAEFVRARL (997 aa). The Ketosynthase family 3 (KS3) 1 domain occupies 26 to 451; it reads DEPIAVIGLS…GTNCHVVVSA (426 aa). The interval 60–80 is disordered; it reads RVPADRETPPSTEEESADGEA. Catalysis depends on glutamine 197, which acts as the For decarboxylation activity of LM. Catalysis depends on serine 662, which acts as the For acyltransferase activity of LM. One can recognise a Carrier 1 domain in the interval 945 to 1020; that stretch reads PDPVETVRQL…ETAEFVRARL (76 aa). Position 980 is an O-(pantetheine 4'-phosphoryl)serine (serine 980). In terms of domain architecture, Ketosynthase family 3 (KS3) 2 spans 1038 to 1454; it reads DEPIAVVAMS…GTNAHVILEQ (417 aa). 4 module regions span residues 1038 to 2517, 2538 to 4063, 4084 to 5636, and 5655 to 7400; these read DEPI…AGEL, EDPI…LQRI, DDPI…GSEV, and DEPV…GEQL. Residues cysteine 1201, histidine 1336, and histidine 1376 each act as for beta-ketoacyl synthase 1 activity in the active site. In terms of domain architecture, Carrier 2 spans 2442–2517; that stretch reads RVLLDLVRGR…ALAEHLAGEL (76 aa). O-(pantetheine 4'-phosphoryl)serine is present on serine 2477. The Ketosynthase family 3 (KS3) 3 domain occupies 2538–2964; the sequence is EDPIAIVAMS…GTNAHVIIEE (427 aa). Residues cysteine 2711, histidine 2846, and histidine 2886 each act as for beta-ketoacyl synthase 2 activity in the active site. Positions 3988–4063 constitute a Carrier 3 domain; the sequence is QALQDLVLTE…ATTEYLLQRI (76 aa). Position 4023 is an O-(pantetheine 4'-phosphoryl)serine (serine 4023). The 431-residue stretch at 4084–4514 folds into the Ketosynthase family 3 (KS3) 4 domain; sequence DDPIAIVAMG…GTNAHVILEQ (431 aa). Residues cysteine 4261, histidine 4396, and histidine 4436 each act as for beta-ketoacyl synthase 3 activity in the active site. Positions 5561 to 5636 constitute a Carrier 4 domain; that stretch reads TALLDLIRGQ…ALAEYVGSEV (76 aa). Serine 5596 bears the O-(pantetheine 4'-phosphoryl)serine mark. The region spanning 5655 to 6081 is the Ketosynthase family 3 (KS3) 5 domain; sequence DEPVAIIGMS…GTNAHVILEQ (427 aa). Catalysis depends on for beta-ketoacyl synthase 4 activity residues cysteine 5828, histidine 5963, and histidine 6003. An N-terminal hotdog fold region spans residues 6561–6685; the sequence is HPLLGAAVAL…GVLASGAATV (125 aa). Residues 6561–6841 form the PKS/mFAS DH domain; that stretch reads HPLLGAAVAL…LRPVSADTIA (281 aa). Catalysis depends on histidine 6593, which acts as the Proton acceptor; for dehydratase activity. A C-terminal hotdog fold region spans residues 6700-6841; the sequence is ATAVDIDGLY…LRPVSADTIA (142 aa). Aspartate 6761 serves as the catalytic Proton donor; for dehydratase activity. The 76-residue stretch at 7325–7400 folds into the Carrier 5 domain; that stretch reads QELLDFVCEH…LLAGHIGEQL (76 aa). Residue serine 7360 is modified to O-(pantetheine 4'-phosphoryl)serine.

Homodimer. The loading module (LM, residues 13-926) dimerizes. LM cross-links to its cognate acyl-carrier domain in a manner that seems physiological; mutation of residues in the 2 domains alters reactions efficiency in a manner predicted by the cross-linked crystal. The cofactor is pantetheine 4'-phosphate.

It functions in the pathway antibiotic biosynthesis. Its function is as follows. First protein in the synthesis of the 16-membered macrolide antibiotics FD-891 and FD-892. Composed of 5 modules; the first is a loading module (LM) that synthesizes a starter unit used by the first elongation module for polyketide chain elongation. The starter unit is extended by multiple rounds of addition of malonyl-CoA or methylmalonyl-CoA, and other modifications to help generate the final products. The loading module (residues 1-927, LM with an inactive acyltransferase domain) preferentially decarboxylates malonyl-GfsA acyl carrier protein of the LM (ACP-LM) over methylmalonyl-GfsA ACP-LM and has no activity on malonyl-CoA or methymalonyl-CoA. LM decarboxylates malonyl-ACP-LM better than the malonyl-ACP-1 module of GfsA (i.e. the next module in the same protein) and has no activity on other malonyl-ACP modules. This Streptomyces halstedii protein is Polyketide synthase GfsA.